Reading from the N-terminus, the 343-residue chain is 4-hydroxy-2-oxovalerate aldolase 2 (343 aa).

The Pyruvate carboxyltransferase domain maps to 8 to 260 (ITVHDMSLRD…ETGVDVFAIS (253 aa)). 16–17 (RD) is a binding site for substrate. Mn(2+) is bound at residue Asp17. The active-site Proton acceptor is the His20. Substrate-binding residues include Ser170 and His199. His199 and His201 together coordinate Mn(2+). Position 290 (Tyr290) interacts with substrate.

The protein belongs to the 4-hydroxy-2-oxovalerate aldolase family.

It carries out the reaction (S)-4-hydroxy-2-oxopentanoate = acetaldehyde + pyruvate. In Burkholderia lata (strain ATCC 17760 / DSM 23089 / LMG 22485 / NCIMB 9086 / R18194 / 383), this protein is 4-hydroxy-2-oxovalerate aldolase 2.